The primary structure comprises 490 residues: Cytochrome P450 90D2 (490 aa).

The chain crosses the membrane as a helical span at residues 4–24 (AAAGWAAPAFAVAAVVIWVVL). Position 437 (cysteine 437) interacts with heme.

Belongs to the cytochrome P450 family. It depends on heme as a cofactor. In terms of tissue distribution, expressed at low levels leaf blades, shoot apex and elongating stem.

It is found in the membrane. The catalysed reaction is 6-deoxoteasterone + reduced [NADPH--hemoprotein reductase] + O2 = 3-dehydro-6-deoxoteasterone + oxidized [NADPH--hemoprotein reductase] + 2 H2O + H(+). Its pathway is plant hormone biosynthesis; brassinosteroid biosynthesis. Catalyzes the C6-oxidation step in brassinosteroids biosynthesis. May convert 6-deoxoteasterone (6-deoxoTE) to 3-dehydro-6-deoxoteasterone (6-deoxo3DT, 6-deoxo3DHT), and teasterone (TE) to 3-dehydroteasterone (3DT, 3-DHT). Involved in the elongation of leaf sheaths and stems. In Oryza sativa subsp. japonica (Rice), this protein is Cytochrome P450 90D2.